The following is a 671-amino-acid chain: RNA polymerase sigma factor RpoD (671 aa).

2 disordered regions span residues 1-45 and 229-260; these read MKKK…SKIK and DDDE…VSEK. Residues 251–260 show a composition bias toward basic and acidic residues; sequence EERKKVVSEK. Residues 436-506 form a sigma-70 factor domain-2 region; it reads MAKSNLRLVV…SRAIADQART (71 aa). The Interaction with polymerase core subunit RpoC signature appears at 460–463; it reads DLIQ. The tract at residues 515–591 is sigma-70 factor domain-3; sequence DTINRINKVM…DKNIVSSIDH (77 aa). The segment at 604 to 658 is sigma-70 factor domain-4; the sequence is VLDQLNEREKAVIRMRFGLLDDESDRTLEEIGKELNVTRERVRQIESSAIKKLRS. Positions 631 to 650 form a DNA-binding region, H-T-H motif; it reads LEEIGKELNVTRERVRQIES.

It belongs to the sigma-70 factor family. RpoD/SigA subfamily. As to quaternary structure, interacts transiently with the RNA polymerase catalytic core.

It is found in the cytoplasm. Functionally, sigma factors are initiation factors that promote the attachment of RNA polymerase to specific initiation sites and are then released. This sigma factor is the primary sigma factor during exponential growth. The chain is RNA polymerase sigma factor RpoD from Helicobacter pylori (strain ATCC 700392 / 26695) (Campylobacter pylori).